A 283-amino-acid polypeptide reads, in one-letter code: Formamidopyrimidine-DNA glycosylase (283 aa).

Pro-2 acts as the Schiff-base intermediate with DNA in catalysis. The active-site Proton donor is the Glu-3. Lys-58 serves as the catalytic Proton donor; for beta-elimination activity. 3 residues coordinate DNA: His-100, Arg-119, and Lys-162. The FPG-type zinc finger occupies 247–283 (RVYGREGQRCQTPDCAEKILRKVQSGRSSFYCPACQR). The Proton donor; for delta-elimination activity role is filled by Arg-273.

The protein belongs to the FPG family. As to quaternary structure, monomer. Zn(2+) serves as cofactor.

It carries out the reaction Hydrolysis of DNA containing ring-opened 7-methylguanine residues, releasing 2,6-diamino-4-hydroxy-5-(N-methyl)formamidopyrimidine.. The catalysed reaction is 2'-deoxyribonucleotide-(2'-deoxyribose 5'-phosphate)-2'-deoxyribonucleotide-DNA = a 3'-end 2'-deoxyribonucleotide-(2,3-dehydro-2,3-deoxyribose 5'-phosphate)-DNA + a 5'-end 5'-phospho-2'-deoxyribonucleoside-DNA + H(+). Its function is as follows. Involved in base excision repair of DNA damaged by oxidation or by mutagenic agents. Acts as a DNA glycosylase that recognizes and removes damaged bases. Has a preference for oxidized purines, such as 7,8-dihydro-8-oxoguanine (8-oxoG). Has AP (apurinic/apyrimidinic) lyase activity and introduces nicks in the DNA strand. Cleaves the DNA backbone by beta-delta elimination to generate a single-strand break at the site of the removed base with both 3'- and 5'-phosphates. The protein is Formamidopyrimidine-DNA glycosylase of Jannaschia sp. (strain CCS1).